A 319-amino-acid chain; its full sequence is F-box only protein 8 (319 aa).

The F-box domain maps to 68 to 111 (FINLEMLPPELSFTILSYLNATDLCLASCVWQDLANDELLWQGL). The 131-residue stretch at 146-276 (FNANPDEGVN…LILLSIDLTS (131 aa)) folds into the SEC7 domain.

Its function is as follows. May promote guanine-nucleotide exchange on an ARF. Promotes the activation of ARF through replacement of GDP with GTP (Potential). The sequence is that of F-box only protein 8 (FBXO8) from Bos taurus (Bovine).